Consider the following 260-residue polypeptide: COP9 signalosome complex subunit 7 (260 aa).

A PCI domain is found at 1–159 (MDIEQKQAEI…RCFEVPFAAG (159 aa)). The segment at 228–260 (IRGNKEMFGEPSGVMDYEEDGIRPKRRRHPVTR) is disordered. Residues 251 to 260 (PKRRRHPVTR) are compositionally biased toward basic residues.

Belongs to the CSN7/EIF3M family. CSN7 subfamily. As to quaternary structure, component of the CSN complex, probably composed of CSN1, CSN2, CSN3, CSN4, CSN5 (CSN5A or CSN5B), CSN6 (CSN6A or CSN6B), CSN7 and CSN8. In the CSN complex, it probably interacts directly with CSN4. Interacts (via PCI domain) with CSN1 (via PCI domain) and CSN8 (via PCI domain), and (via C-terminal tail) with CSN6A, TSO2 and RNR2A. Cannot interact simultaneously with CSN1 and CSN8 to form ternary complexes. Also exists as a monomeric form. Binds to the translation initiation factors TIF3E1 and TIF3H1. Phosphorylated.

The protein resides in the cytoplasm. It is found in the nucleus. In terms of biological role, component of the COP9 signalosome complex (CSN), a complex involved in various cellular and developmental processes such as photomorphogenesis and auxin and jasmonate responses. The CSN complex is an essential regulator of the ubiquitin (Ubl) conjugation pathway by mediating the deneddylation of the cullin subunits of SCF-type E3 ligase complexes, leading to decrease the Ubl ligase activity of SCF. It is involved in repression of photomorphogenesis in darkness by regulating the activity of COP1-containing Ubl ligase complexes. The complex is also required for degradation of IAA6 by regulating the activity of the Ubl ligase SCF-TIR complex. Regulates the TSO2 subcellular localization. May be involved in nucleic acid binding. The chain is COP9 signalosome complex subunit 7 (CSN7) from Arabidopsis thaliana (Mouse-ear cress).